The following is a 329-amino-acid chain: MQEIMAKLEQLENLNDLERLRVEVMGKKGILTQQFALLKNLEGETKKTFAKELNKNKENFEKMLESKRESLLKVQMNENLTKEVVDASLFTALRPKSNGHPIYQTMDRIIDFFVNMNFAIQTGPLVEDDFHNFEALNLPVFHPARDMQDTFYFKDSMLLRTHTSPVQIRTMQSQHIPIRMIAPGSVFRRDYDLTHSPMFHQVEGLVVDEKDKISFVHLKYILEDFLHYMFGDVRIRFRSSFFPFTEPSAEVDISCVFCGGSGCRVCSHTGWLEVLGCGIVNQKVFDAVGHKNVSGYAFGLGVERFAMLLHRVNDLRSFFETDLRVLEQF.

Glu-246 contributes to the Mg(2+) binding site.

Belongs to the class-II aminoacyl-tRNA synthetase family. Phe-tRNA synthetase alpha subunit type 1 subfamily. Tetramer of two alpha and two beta subunits. Mg(2+) is required as a cofactor.

Its subcellular location is the cytoplasm. The enzyme catalyses tRNA(Phe) + L-phenylalanine + ATP = L-phenylalanyl-tRNA(Phe) + AMP + diphosphate + H(+). This is Phenylalanine--tRNA ligase alpha subunit from Helicobacter hepaticus (strain ATCC 51449 / 3B1).